Consider the following 200-residue polypeptide: Glycerol-3-phosphate acyltransferase (200 aa).

Transmembrane regions (helical) follow at residues 2-22 (IHLLLVVAAYLLGSLSFAVIV), 51-71 (TAAILTLLGDALKGWVAVVAA), 84-104 (IVLLCALAAFIGHLFPVFFGF), 113-133 (ALGILVALDPWLGLACLATWV), and 143-163 (SLSALVTAVLAPVYAGLLLGW).

Belongs to the PlsY family. In terms of assembly, probably interacts with PlsX.

Its subcellular location is the cell inner membrane. The catalysed reaction is an acyl phosphate + sn-glycerol 3-phosphate = a 1-acyl-sn-glycero-3-phosphate + phosphate. It participates in lipid metabolism; phospholipid metabolism. Functionally, catalyzes the transfer of an acyl group from acyl-phosphate (acyl-PO(4)) to glycerol-3-phosphate (G3P) to form lysophosphatidic acid (LPA). This enzyme utilizes acyl-phosphate as fatty acyl donor, but not acyl-CoA or acyl-ACP. The chain is Glycerol-3-phosphate acyltransferase from Thiobacillus denitrificans (strain ATCC 25259 / T1).